The sequence spans 332 residues: MLIAQRPTLTEESLNPQRSRFTIEPLEPGFGYTLGNSLRRTLLSSIPGAAVTSVRISGVPHEFTTLPGVEEDVTEILLNIKGIVLTSEYDEPVVMYLRKSGKGEATAGDITPPAGVTIANPDMHIATLAEDGELEIEFTVERGRGYVPAQMNKQDNAEIGRIPVDSIYSPVLKVSYRVEATRVEQRTDFDKLILDVETKPAISPRDAVASAGSTLVELFGLCRELNTQAEGVEVGPAPVAEETNPEMNIPIEDLNLTQRSYNCLKREGIHTIGELVAHTEQDLLDIRNFGMKSIDEVKEKLQSLGLALKASPLGNFDANNLEGGTFFSPEDE.

Residues 1–226 are alpha N-terminal domain (alpha-NTD); sequence MLIAQRPTLT…ELFGLCRELN (226 aa). An alpha C-terminal domain (alpha-CTD) region spans residues 245–332; it reads PEMNIPIEDL…GGTFFSPEDE (88 aa).

This sequence belongs to the RNA polymerase alpha chain family. Homodimer. The RNAP catalytic core consists of 2 alpha, 1 beta, 1 beta' and 1 omega subunit. When a sigma factor is associated with the core the holoenzyme is formed, which can initiate transcription.

It catalyses the reaction RNA(n) + a ribonucleoside 5'-triphosphate = RNA(n+1) + diphosphate. Functionally, DNA-dependent RNA polymerase catalyzes the transcription of DNA into RNA using the four ribonucleoside triphosphates as substrates. The protein is DNA-directed RNA polymerase subunit alpha of Bifidobacterium adolescentis (strain ATCC 15703 / DSM 20083 / NCTC 11814 / E194a).